We begin with the raw amino-acid sequence, 105 residues long: Large ribosomal subunit protein uL24 (105 aa).

This sequence belongs to the universal ribosomal protein uL24 family. In terms of assembly, part of the 50S ribosomal subunit.

Functionally, one of two assembly initiator proteins, it binds directly to the 5'-end of the 23S rRNA, where it nucleates assembly of the 50S subunit. One of the proteins that surrounds the polypeptide exit tunnel on the outside of the subunit. The protein is Large ribosomal subunit protein uL24 of Nitrosococcus oceani (strain ATCC 19707 / BCRC 17464 / JCM 30415 / NCIMB 11848 / C-107).